A 162-amino-acid chain; its full sequence is V-type proton ATPase subunit c' (162 aa).

Topologically, residues 1–11 (MSSNLCPIYSS) are lumenal. Residues 12 to 32 (FFGFAGVCASMVFSCLGAGYG) form a helical membrane-spanning segment. Residues 33-54 (TALAGRGIAAVGAFRPEIVMKS) are Cytoplasmic-facing. A helical transmembrane segment spans residues 55 to 75 (LIPVVMSGIIGVYGLVMSVLI). The Lumenal portion of the chain corresponds to 76–93 (AGDMSPDNDYSLFSGFIH). Residues 94–114 (LSAGLAVGLTGVAAGYAIGVV) traverse the membrane as a helical segment. At 115–132 (GDRGVQSFMRQDRIFVSM) the chain is on the cytoplasmic side. The helical transmembrane segment at 133–153 (VLILIFAEVLGLYGLIVGLIL) threads the bilayer. Residues 154–162 (QTKTSNVCY) lie on the Lumenal side of the membrane.

The protein belongs to the V-ATPase proteolipid subunit family. As to quaternary structure, V-ATPase is a heteromultimeric enzyme composed of a peripheral catalytic V1 complex (components A to H) attached to an integral membrane V0 proton pore complex (components: a, c, c', c'', d, e, f and VOA1). The decameric c-ring forms the proton-conducting pore, and is composed of eight proteolipid subunits c, one subunit c' and one subunit c''.

The protein localises to the vacuole membrane. Its function is as follows. Proton-conducting pore forming subunit of the V0 complex of vacuolar(H+)-ATPase (V-ATPase), a multisubunit enzyme composed of a peripheral complex (V1) that hydrolyzes ATP and a membrane integral complex (V0) that translocates protons. V-ATPase is responsible for acidifying and maintaining the pH of intracellular compartments. This Schizosaccharomyces pombe (strain 972 / ATCC 24843) (Fission yeast) protein is V-type proton ATPase subunit c'.